Here is a 954-residue protein sequence, read N- to C-terminus: MTELLQSLSTQNEFVGRHNGPKLSDQQKMLEAINAVSLDALISETVPANIRLEQPMTLAEAKSEADMLATMKQFAKQNQVKRTFIGQGYYNTFTPNVILRNVLENPGWYTAYTPYQPEISQGRLESLLNFQQMVIDLTGMEIANASLLDEATAAAEAMTLCKRAGKSKSNVFFVADDVHPQTIEVVKTRAKFIGFEVLVGSLESLPEQDVFGALVQYPSTTGEVRDLTDIIAKAQANKTLVTVATDLLACTLLKPAGEMGADVAIGSAQRFGVPMGYGGPHAAFMATRDKHKRTMPGRVIGVSIDAKGNQALRMAMQTREQHIRREKATSNICTAQALLANMASFYAVYHGAEGLRTIARRTHHMTAILAAGLTKGGFELAHNSFFDTITINTGEKTQDLYTKALAADINLRVLPGKLGISLDETTTVADVEALFAIFGVKEDVTALSTEVAGNEFAAIPEALRRTSEYLTHPVFNTYHSETQMMRYLKQLENKDFSLTHGMIPLGSCTMKLNAAAEMIPITWPEFGSIHPFAPAEQAAGYAALAKDLKEKLCEITGYDAFSLQPNSGASGEYAGLIAIQRYHESRGEGHRNVCLIPSSAHGTNPATASMVSMKVVVVKCDDEGNIDIDDLAAKIEKHKDNLSSIMITYPSTHGVYEEKVKEVCEMVHAAGGQVYLDGANMNAQVGLTSPGFIGSDVSHLNLHKTFCIPHGGGGPGMGPIGVKSHLAPFLPGHIENGVEGEDFAVSAADFGSASILPISWAYIAMMGEAGLSNATKVAILNANYVMERLRPHYPVLYRGKNGRVAHECIIDIRPLKEETGISEEDIAKRLMDYGFHAPTMSFPVAGTLMVEPTESEDLAELNRFCDAMISIREEMTKVKNGEWPLENNPLVNAPHTQVDLSAEEWDRPYSRELGCFPSKATKSWKYWPTVNRVDNVYGDRNLICSCPSIDNYED.

N6-(pyridoxal phosphate)lysine is present on Lys704.

This sequence belongs to the GcvP family. The glycine cleavage system is composed of four proteins: P, T, L and H. The cofactor is pyridoxal 5'-phosphate.

The enzyme catalyses N(6)-[(R)-lipoyl]-L-lysyl-[glycine-cleavage complex H protein] + glycine + H(+) = N(6)-[(R)-S(8)-aminomethyldihydrolipoyl]-L-lysyl-[glycine-cleavage complex H protein] + CO2. Its function is as follows. The glycine cleavage system catalyzes the degradation of glycine. The P protein binds the alpha-amino group of glycine through its pyridoxal phosphate cofactor; CO(2) is released and the remaining methylamine moiety is then transferred to the lipoamide cofactor of the H protein. This chain is Glycine dehydrogenase (decarboxylating), found in Vibrio parahaemolyticus serotype O3:K6 (strain RIMD 2210633).